Here is a 257-residue protein sequence, read N- to C-terminus: Snake venom serine protease Haly-2 (257 aa).

Positions 1 to 18 (MVLIRVLANLLILQLSYA) are cleaved as a signal peptide. The propeptide occupies 19 to 24 (QKSSEL). The Peptidase S1 domain maps to 25 to 248 (IIGGDECNIN…HLEWIRSIIA (224 aa)). Disulfide bonds link Cys31–Cys162, Cys49–Cys65, Cys97–Cys255, Cys141–Cys209, Cys173–Cys188, and Cys199–Cys224. His64 functions as the Charge relay system in the catalytic mechanism. Asn100 carries an N-linked (GlcNAc...) asparagine glycan. Asp109 (charge relay system) is an active-site residue. The Charge relay system role is filled by Ser203.

This sequence belongs to the peptidase S1 family. Snake venom subfamily. As to quaternary structure, monomer. As to expression, expressed by the venom gland.

The protein resides in the secreted. In terms of biological role, snake venom serine protease that may act in the hemostasis system of the prey. This Gloydius brevicauda (Korean slamosa snake) protein is Snake venom serine protease Haly-2.